We begin with the raw amino-acid sequence, 288 residues long: Ice-binding protein (288 aa).

Residues 1-22 (MFSTTLINTFSLGLLAVVSVVA) form the signal peptide. Short sequence motifs (ice-binding site motif (T-A/G-X-T/N)) lie at residues 75 to 78 (TAGN) and 154 to 157 (TAFN). The N-linked (GlcNAc...) asparagine glycan is linked to N194. 2 short sequence motifs (ice-binding site motif (T-A/G-X-T/N)) span residues 196 to 199 (TGVT) and 265 to 268 (TGAT).

This sequence belongs to the ice-binding protein family.

The protein resides in the secreted. Its function is as follows. Binds ice crystals and most probably inhibits their growth in order to prevent cell damage from extracellular ice. This chain is Ice-binding protein, found in Lentinula edodes (Shiitake mushroom).